A 162-amino-acid chain; its full sequence is uncharacterized protein (162 aa).

5 consecutive transmembrane segments (helical) span residues 15–40 (TIYS…YFLL), 47–66 (ISML…TTAL), 76–98 (YSIL…FLVY), 105–124 (KWLG…DPLL), and 128–150 (GYAV…WLVI).

It localises to the cell membrane. This is an uncharacterized protein from Archaeoglobus fulgidus (strain ATCC 49558 / DSM 4304 / JCM 9628 / NBRC 100126 / VC-16).